The chain runs to 274 residues: Large ribosomal subunit protein uL2 (274 aa).

Disordered regions lie at residues Ala-28 to Gly-55 and Val-224 to Lys-274.

It belongs to the universal ribosomal protein uL2 family. As to quaternary structure, part of the 50S ribosomal subunit. Forms a bridge to the 30S subunit in the 70S ribosome.

Functionally, one of the primary rRNA binding proteins. Required for association of the 30S and 50S subunits to form the 70S ribosome, for tRNA binding and peptide bond formation. It has been suggested to have peptidyltransferase activity; this is somewhat controversial. Makes several contacts with the 16S rRNA in the 70S ribosome. This Pseudomonas putida (strain GB-1) protein is Large ribosomal subunit protein uL2.